The following is a 916-amino-acid chain: Protein translocase subunit SecA (916 aa).

ATP contacts are provided by residues glutamine 87, 105–109 (GEGKT), and aspartate 512. The disordered stretch occupies residues 857 to 916 (QHAEAPSMEQAVAGEEEELPEGPAPVVPLEPVRNEQKIGRNEPCPCGSGKKYKHCHGQLD). Residues cysteine 900, cysteine 902, cysteine 911, and histidine 912 each coordinate Zn(2+). The span at 906–916 (KKYKHCHGQLD) shows a compositional bias: basic residues.

It belongs to the SecA family. In terms of assembly, monomer and homodimer. Part of the essential Sec protein translocation apparatus which comprises SecA, SecYEG and auxiliary proteins SecDF-YajC and YidC. Zn(2+) serves as cofactor.

It localises to the cell inner membrane. The protein localises to the cytoplasm. The catalysed reaction is ATP + H2O + cellular proteinSide 1 = ADP + phosphate + cellular proteinSide 2.. Its function is as follows. Part of the Sec protein translocase complex. Interacts with the SecYEG preprotein conducting channel. Has a central role in coupling the hydrolysis of ATP to the transfer of proteins into and across the cell membrane, serving both as a receptor for the preprotein-SecB complex and as an ATP-driven molecular motor driving the stepwise translocation of polypeptide chains across the membrane. This chain is Protein translocase subunit SecA, found in Pseudomonas aeruginosa (strain UCBPP-PA14).